A 139-amino-acid chain; its full sequence is Putative nickel-responsive regulator (139 aa).

Ni(2+) contacts are provided by histidine 79, histidine 90, histidine 92, and cysteine 98.

This sequence belongs to the transcriptional regulatory CopG/NikR family. Ni(2+) serves as cofactor.

Its function is as follows. Transcriptional regulator. This is Putative nickel-responsive regulator from Geotalea uraniireducens (strain Rf4) (Geobacter uraniireducens).